The chain runs to 238 residues: MAVEGGMKCVKFLLYVLLLAFCACAVGLIAIGVAVQVVLKQAITHETTAGSLLPVVIIAVGAFLFLVAFVGCCGACKENYCLMITFAIFLSLIMLVEVAVAIAGYVFRDQVKSEFNKSFQQQMQNYLKDNKTATILDKLQKENNCCGASNYTDWENIPGMAKDRVPDSCCINITVGCGNDFKESTIHTQGCVETIAIWLRKNILLVAAAALGIAFVEVLGIIFSCCLVKSIRSGYEVM.

Residues 1–11 (MAVEGGMKCVK) lie on the Cytoplasmic side of the membrane. A helical membrane pass occupies residues 12 to 32 (FLLYVLLLAFCACAVGLIAIG). The Extracellular segment spans residues 33-51 (VAVQVVLKQAITHETTAGS). Residues 52 to 72 (LLPVVIIAVGAFLFLVAFVGC) traverse the membrane as a helical segment. The Cytoplasmic portion of the chain corresponds to 73-81 (CGACKENYC). A helical transmembrane segment spans residues 82 to 102 (LMITFAIFLSLIMLVEVAVAI). Topologically, residues 103-203 (AGYVFRDQVK…TIAIWLRKNI (101 aa)) are extracellular. N-linked (GlcNAc...) asparagine glycosylation is found at Asn116, Asn130, Asn150, and Asn172. Residues 204-224 (LLVAAAALGIAFVEVLGIIFS) traverse the membrane as a helical segment. Residues 225–238 (CCLVKSIRSGYEVM) are Cytoplasmic-facing. Positions 234–238 (GYEVM) match the Lysosomal targeting motif motif.

The protein belongs to the tetraspanin (TM4SF) family. In terms of assembly, interacts with TIMP1 and ITGB1 and recruits TIMP1 to ITGB1. Interacts with CD9. Identified in a complex with CD9 and ITGB3. Interacts with PMEL. Interacts with KDR/VEGFR2; identified in a complex with ITGB1 and KDR/VEGFR2 and is required to recruit KDR to ITGB1 complexes. Interacts with SYT7. Palmitoylated at a low, basal level in unstimulated platelets. The level of palmitoylation increases when platelets are activated by thrombin (in vitro). As to expression, ubiquitous. Strongly expressed in kidney. Detected in spleen, bone marrow, peripheral blood mononuclear cells and macrophages.

It is found in the cell membrane. It localises to the lysosome membrane. The protein localises to the late endosome membrane. Its subcellular location is the endosome. The protein resides in the multivesicular body. It is found in the melanosome. It localises to the secreted. The protein localises to the extracellular exosome. Its subcellular location is the cell surface. Its function is as follows. Functions as a cell surface receptor for TIMP1 and plays a role in the activation of cellular signaling cascades. Plays a role in the activation of ITGB1 and integrin signaling, leading to the activation of AKT, FAK/PTK2 and MAP kinases. Promotes cell survival, reorganization of the actin cytoskeleton, cell adhesion, spreading and migration, via its role in the activation of AKT and FAK/PTK2. Plays a role in VEGFA signaling via its role in regulating the internalization of KDR/VEGFR2. Plays a role in intracellular vesicular transport processes, and is required for normal trafficking of the PMEL luminal domain that is essential for the development and maturation of melanocytes. Plays a role in the adhesion of leukocytes onto endothelial cells via its role in the regulation of SELP trafficking. May play a role in mast cell degranulation in response to Ms4a2/FceRI stimulation, but not in mast cell degranulation in response to other stimuli. This is CD63 antigen (Cd63) from Mus musculus (Mouse).